A 396-amino-acid chain; its full sequence is Bone morphogenetic protein 2 (396 aa).

The N-terminal stretch at 1–23 (MVAGTRCLLALLLPQVLLGGAAG) is a signal peptide. Residues 24 to 282 (LVPELGRRKF…GHPLHKREKR (259 aa)) constitute a propeptide, cleaved by PCSK5. Residues 84-121 (RRHSGQPGSPAPDHRLERAASRANTVRSFHHEESLEEL) are disordered. Phosphoserine is present on S87. Residues N135, N163, N164, and N200 are each glycosylated (N-linked (GlcNAc...) asparagine). Residues 271-293 (GKGHPLHKREKRQAKHKQRKRLK) form a disordered region. Residues 274 to 293 (HPLHKREKRQAKHKQRKRLK) are compositionally biased toward basic residues. 3 disulfides stabilise this stretch: C296–C361, C325–C393, and C329–C395. N-linked (GlcNAc...) (high mannose) asparagine glycosylation occurs at N338.

Belongs to the TGF-beta family. In terms of assembly, homodimer; disulfide-linked. Interacts with SOSTDC1. Interacts with GREM2, RGMA, RGMB and RGMC. Interacts with ASPN. Interacts with MAFP5. Interacts with FBN1 (via N-terminal domain) and FBN2. Interacts with type I receptor BMPR1A. Interacts with type II receptor BMPR2. Interacts with SCUBE3. Interacts with TNFAIP6 (primarily via Link domain); this interaction is inhibited by hyaluronan. Interacts with ERFE. Interacts with BMPR1A/ALK3; the interaction may induce HAMP expression. Forms heterodimers with BMP6 in vitro; the heterodimer then binds to its receptor BMPR1A /ALK3 and may induce HAMP expression. Interacts with TGFBR3. As to expression, particularly abundant in lung, spleen and colon and in low but significant levels in heart, brain, placenta, liver, skeletal muscle, kidney, pancreas, prostate, ovary and small intestine.

It is found in the secreted. Its function is as follows. Growth factor of the TGF-beta superfamily that plays essential roles in many developmental processes, including cardiogenesis, neurogenesis, and osteogenesis. Induces cartilage and bone formation. Initiates the canonical BMP signaling cascade by associating with type I receptor BMPR1A and type II receptor BMPR2. Once all three components are bound together in a complex at the cell surface, BMPR2 phosphorylates and activates BMPR1A. In turn, BMPR1A propagates signal by phosphorylating SMAD1/5/8 that travel to the nucleus and act as activators and repressors of transcription of target genes. Also acts to promote expression of HAMP, via the interaction with its receptor BMPR1A/ALK3. Can also signal through non-canonical pathways such as ERK/MAP kinase signaling cascade that regulates osteoblast differentiation. Also stimulates the differentiation of myoblasts into osteoblasts via the EIF2AK3-EIF2A-ATF4 pathway by stimulating EIF2A phosphorylation which leads to increased expression of ATF4 which plays a central role in osteoblast differentiation. Acts as a positive regulator of odontoblast differentiation during mesenchymal tooth germ formation, expression is repressed during the bell stage by MSX1-mediated inhibition of CTNNB1 signaling. This Homo sapiens (Human) protein is Bone morphogenetic protein 2 (BMP2).